Consider the following 203-residue polypeptide: Molybdenum cofactor guanylyltransferase (203 aa).

Residues 20–22 (LAG), lysine 33, asparagine 61, aspartate 78, and aspartate 108 contribute to the GTP site. Residue aspartate 108 participates in Mg(2+) binding.

The protein belongs to the MobA family. In terms of assembly, monomer. It depends on Mg(2+) as a cofactor.

Its subcellular location is the cytoplasm. It catalyses the reaction Mo-molybdopterin + GTP + H(+) = Mo-molybdopterin guanine dinucleotide + diphosphate. Transfers a GMP moiety from GTP to Mo-molybdopterin (Mo-MPT) cofactor (Moco or molybdenum cofactor) to form Mo-molybdopterin guanine dinucleotide (Mo-MGD) cofactor. This chain is Molybdenum cofactor guanylyltransferase, found in Vibrio cholerae serotype O1 (strain ATCC 39315 / El Tor Inaba N16961).